Consider the following 139-residue polypeptide: Small ribosomal subunit protein bS6 (139 aa).

The interval 118 to 139 is disordered; sequence SFKGGSKIETPTGSESTDIQEK. Polar residues predominate over residues 126–139; the sequence is ETPTGSESTDIQEK.

This sequence belongs to the bacterial ribosomal protein bS6 family.

Its function is as follows. Binds together with bS18 to 16S ribosomal RNA. In Borrelia garinii subsp. bavariensis (strain ATCC BAA-2496 / DSM 23469 / PBi) (Borreliella bavariensis), this protein is Small ribosomal subunit protein bS6.